A 396-amino-acid chain; its full sequence is MAEKEHYERTKPHVNIGTIGHVDHGKTTLTAAITTVLAEDGLAQAEDYSQIDAAPEEKERGITINTAHVEYETKNRHYAHMDAPGHADYIKNMITGAAQMDGAILVVAATDGPMPQTREHILLARQVGVQYIVVFLNKVDLVDDPELIDLVEMEVRDLLSEYDYPGDDVPVIRGSALKALEGDPEQQDVIRKLMETVDEYIPTPERDTDKPFLMPVEDVFTITGRGTVASGRIDRGTVKVGDEVEIVGLTDKIEKSTVTGLEMFHKTLDLGEAGDNVGVLLRGIDRDQVERGQVLAAPGSIQTHKNFKGQVYILNKDEGGRHTPFFSDYRPQFYFHTTDVTGKIELPEGTEMVMPGDNVEFTVELIKPVAIEKGTKFTIREGGKTVGAGQVTEILD.

One can recognise a tr-type G domain in the interval 11–205; that stretch reads KPHVNIGTIG…TVDEYIPTPE (195 aa). Positions 20-27 are G1; it reads GHVDHGKT. 20–27 contributes to the GTP binding site; the sequence is GHVDHGKT. A Mg(2+)-binding site is contributed by Thr27. Residues 61–65 are G2; that stretch reads GITIN. A G3 region spans residues 82 to 85; the sequence is DAPG. Residues 82–86 and 137–140 each bind GTP; these read DAPGH and NKVD. Residues 137 to 140 are G4; the sequence is NKVD. The tract at residues 175 to 177 is G5; that stretch reads SAL.

The protein belongs to the TRAFAC class translation factor GTPase superfamily. Classic translation factor GTPase family. EF-Tu/EF-1A subfamily. Monomer.

The protein localises to the cytoplasm. It carries out the reaction GTP + H2O = GDP + phosphate + H(+). Its function is as follows. GTP hydrolase that promotes the GTP-dependent binding of aminoacyl-tRNA to the A-site of ribosomes during protein biosynthesis. The chain is Elongation factor Tu from Lactobacillus johnsonii (strain CNCM I-12250 / La1 / NCC 533).